The chain runs to 864 residues: Leucine--tRNA ligase (864 aa).

A 'HIGH' region motif is present at residues 42-52 (PYPSGKLHMGH). A 'KMSKS' region motif is present at residues 622 to 626 (KMSKS). Residue Lys625 coordinates ATP.

The protein belongs to the class-I aminoacyl-tRNA synthetase family.

It is found in the cytoplasm. It catalyses the reaction tRNA(Leu) + L-leucine + ATP = L-leucyl-tRNA(Leu) + AMP + diphosphate. The polypeptide is Leucine--tRNA ligase (Cellvibrio japonicus (strain Ueda107) (Pseudomonas fluorescens subsp. cellulosa)).